A 259-amino-acid chain; its full sequence is DNA adenine methylase (259 aa).

Residues tyrosine 7, lysine 11, 32–37, aspartate 50, 156–157, aspartate 171, and tyrosine 181 contribute to the S-adenosyl-L-methionine site; these read FCGGLS and HF.

This sequence belongs to the N(4)/N(6)-methyltransferase family. Monomer.

It carries out the reaction a 2'-deoxyadenosine in DNA + S-adenosyl-L-methionine = an N(6)-methyl-2'-deoxyadenosine in DNA + S-adenosyl-L-homocysteine + H(+). An alpha subtype methylase, recognizes the double-stranded sequence 5'-GATC-3' and methylates A-2. Also acts on 5-hydroxymethylcytosine (hmC)-containing DNA, the normal base in this virus. May prevent degradation of viral DNA by the host restriction-modification antiviral defense system. This is DNA adenine methylase from Enterobacteria phage T4 (Bacteriophage T4).